Consider the following 855-residue polypeptide: Valine--tRNA ligase (855 aa).

The short motif at 44 to 54 (PYPTGNFHIGN) is the 'HIGH' region element. The short motif at 522 to 526 (KMSKS) is the 'KMSKS' region element. ATP is bound at residue Lys525.

Belongs to the class-I aminoacyl-tRNA synthetase family. ValS type 2 subfamily.

It is found in the cytoplasm. The catalysed reaction is tRNA(Val) + L-valine + ATP = L-valyl-tRNA(Val) + AMP + diphosphate. Catalyzes the attachment of valine to tRNA(Val). As ValRS can inadvertently accommodate and process structurally similar amino acids such as threonine, to avoid such errors, it has a 'posttransfer' editing activity that hydrolyzes mischarged Thr-tRNA(Val) in a tRNA-dependent manner. This chain is Valine--tRNA ligase, found in Methanothrix thermoacetophila (strain DSM 6194 / JCM 14653 / NBRC 101360 / PT) (Methanosaeta thermophila).